The sequence spans 211 residues: MHISMFDFSIYIKFFVSLCALVNPIGMIPIFTTMTNHQSHLERKKTNLVANFSAFIILLISLFAGNSILNAFGISINSFRIAGGILIISIAFSMISGKFTKNNKTSKEKNQENISVVPLAMPLIAGPGAISSTIVWSTYYSTWSDFLGCSIAIFLFAFVCWLCFRAAPCVVEILGKTGINIITRIMGLLLMSLGIEFLSIGIKSIFSALLH.

6 helical membrane-spanning segments follow: residues 14 to 34 (FFVS…FTTM), 54 to 74 (AFII…AFGI), 76 to 96 (INSF…SMIS), 116 to 136 (VVPL…TIVW), 144 to 164 (SDFL…WLCF), and 185 to 205 (IMGL…IKSI).

Belongs to the UPF0056 (MarC) family.

The protein resides in the cell membrane. The protein is UPF0056 membrane protein BUsg_257 of Buchnera aphidicola subsp. Schizaphis graminum (strain Sg).